Here is a 256-residue protein sequence, read N- to C-terminus: Thiazole synthase (256 aa).

Lysine 95 functions as the Schiff-base intermediate with DXP in the catalytic mechanism. Residues glycine 156, 182-183, and 204-205 each bind 1-deoxy-D-xylulose 5-phosphate; these read AG and NT.

The protein belongs to the ThiG family. In terms of assembly, homotetramer. Forms heterodimers with either ThiH or ThiS.

It is found in the cytoplasm. It carries out the reaction [ThiS sulfur-carrier protein]-C-terminal-Gly-aminoethanethioate + 2-iminoacetate + 1-deoxy-D-xylulose 5-phosphate = [ThiS sulfur-carrier protein]-C-terminal Gly-Gly + 2-[(2R,5Z)-2-carboxy-4-methylthiazol-5(2H)-ylidene]ethyl phosphate + 2 H2O + H(+). It functions in the pathway cofactor biosynthesis; thiamine diphosphate biosynthesis. Functionally, catalyzes the rearrangement of 1-deoxy-D-xylulose 5-phosphate (DXP) to produce the thiazole phosphate moiety of thiamine. Sulfur is provided by the thiocarboxylate moiety of the carrier protein ThiS. In vitro, sulfur can be provided by H(2)S. This is Thiazole synthase from Salmonella choleraesuis (strain SC-B67).